We begin with the raw amino-acid sequence, 912 residues long: Multiple C2 and transmembrane domain-containing protein (912 aa).

The span at 1–33 (MSRIQYVDQVDQVELDQQQQPGSSSTVSGSTPP) shows a compositional bias: low complexity. Disordered stretches follow at residues 1 to 80 (MSRI…KRAK) and 145 to 165 (SSEG…IGGS). The segment covering 38–49 (PHGSPSLQQSQR) has biased composition (polar residues). C2 domains are found at residues 218 to 337 (QANE…HLQL), 371 to 493 (RNSK…HLML), and 522 to 637 (ERYK…TLKD). Residues D252, D258, D305, D307, and D313 each coordinate Ca(2+). Ca(2+) contacts are provided by D553, D559, D605, and D607. 2 helical membrane-spanning segments follow: residues 729–749 (IVAC…LIIL) and 826–846 (LTWL…FVPL). Residues 887 to 912 (NQYRELPPSAPTDQTRNNPKKKLKGS) form a disordered region.

Ca(2+) is required as a cofactor. As to expression, motor neurons (at protein level).

The protein resides in the endoplasmic reticulum membrane. Functionally, calcium sensor which is essential for the stabilization of normal baseline neurotransmitter release and for the induction and long-term maintenance of presynaptic homeostatic plasticity. The sequence is that of Multiple C2 and transmembrane domain-containing protein from Drosophila melanogaster (Fruit fly).